A 198-amino-acid chain; its full sequence is Large ribosomal subunit protein eL18 (198 aa).

A disordered region spans residues Arg157–Val198. Positions Glu179–Val198 are enriched in basic residues.

The protein belongs to the eukaryotic ribosomal protein eL18 family.

The protein localises to the cytoplasm. The chain is Large ribosomal subunit protein eL18 (RPL18-A) from Leishmania major.